The chain runs to 264 residues: Ribonuclease H (264 aa).

The disordered stretch occupies residues 55–88; it reads GSRYSSSSGPYRRSTTSYGYSPYSSSSSNYSARH. Residues 56–85 are compositionally biased toward low complexity; sequence SRYSSSSGPYRRSTTSYGYSPYSSSSSNYS. Ser-97 carries the post-translational modification Phosphoserine. The RNase H type-1 domain occupies 120–263; that stretch reads CSDRQVVYAD…ADMLARRGAS (144 aa). Mg(2+)-binding residues include Asp-129, Glu-171, Asp-191, and Asp-255.

Belongs to the RNase H family. Requires Mg(2+) as cofactor.

The enzyme catalyses Endonucleolytic cleavage to 5'-phosphomonoester.. In terms of biological role, endonuclease that specifically degrades the RNA of RNA-DNA hybrids. This is Ribonuclease H (rnh1) from Schizosaccharomyces pombe (strain 972 / ATCC 24843) (Fission yeast).